The chain runs to 629 residues: 1-deoxy-D-xylulose-5-phosphate synthase (629 aa).

Thiamine diphosphate is bound by residues histidine 73 and glycine 114 to alanine 116. Residue aspartate 145 participates in Mg(2+) binding. Thiamine diphosphate is bound by residues glycine 146 to alanine 147, asparagine 174, tyrosine 284, and glutamate 360. Mg(2+) is bound at residue asparagine 174.

Belongs to the transketolase family. DXPS subfamily. In terms of assembly, homodimer. Mg(2+) serves as cofactor. It depends on thiamine diphosphate as a cofactor.

It carries out the reaction D-glyceraldehyde 3-phosphate + pyruvate + H(+) = 1-deoxy-D-xylulose 5-phosphate + CO2. Its pathway is metabolic intermediate biosynthesis; 1-deoxy-D-xylulose 5-phosphate biosynthesis; 1-deoxy-D-xylulose 5-phosphate from D-glyceraldehyde 3-phosphate and pyruvate: step 1/1. Functionally, catalyzes the acyloin condensation reaction between C atoms 2 and 3 of pyruvate and glyceraldehyde 3-phosphate to yield 1-deoxy-D-xylulose-5-phosphate (DXP). This chain is 1-deoxy-D-xylulose-5-phosphate synthase, found in Thermomicrobium roseum (strain ATCC 27502 / DSM 5159 / P-2).